Reading from the N-terminus, the 204-residue chain is MEPKAPCPAAVPSEERKFRVLVGVTGSVAALKLPLLVSKLLDVPGLEVTVVTTERAKHFYSPQDVPVTLYSDADEWEMWKRRSDPVLHIDLRRWADLMLVAPLDANTLGKVASGICDNLLTCVIRAWDLNKPLLFCPAMNTAMWEHPLTAQQVAQLKAFGYVEIPCVSKKLVCGDQGLGAMAEVETIVAKVQAVLSQHGSIQQS.

FMN is bound by residues Thr-53 and 104–107 (DANT). Residue Asn-140 participates in substrate binding. Residue Cys-173 is the Proton donor of the active site.

Belongs to the HFCD (homooligomeric flavin containing Cys decarboxylase) superfamily. In terms of assembly, homotrimer. FMN is required as a cofactor.

The enzyme catalyses N-[(R)-4-phosphopantothenoyl]-L-cysteine + H(+) = (R)-4'-phosphopantetheine + CO2. The protein operates within cofactor biosynthesis; coenzyme A biosynthesis; CoA from (R)-pantothenate: step 3/5. In terms of biological role, catalyzes the decarboxylation of the cysteine moiety of 4-phosphopantothenoylcysteine to form 4'-phosphopantotheine and this reaction forms part of the biosynthesis of coenzyme A. This chain is Phosphopantothenoylcysteine decarboxylase (Ppcdc), found in Mus musculus (Mouse).